The primary structure comprises 464 residues: Lysosomal dipeptide transporter MFSD1 (464 aa).

The Dileucine internalization motif motif lies at 11 to 12 (LL). Position 20 is a phosphoserine (S20). Transmembrane regions (helical) follow at residues 38–58 (LAHRLVVLSLMCFLGFGSYFC), 82–102 (LLYAWYSWPNVVLCFLGGFLI), 112–132 (TVIFSCFVCIGQVIFALGGIF), 134–154 (AFWLMELGRFVFGIGGESLAV), 190–210 (LMGWLYGKIEALLGSAGHMTL), 214–234 (LMIGCITCIFSLICALALAYL), 265–285 (LILVFVICVCYYVAVFPFIGL), 303–323 (AINSIVYIISAPMSPLFGLLV), 330–350 (IIWVLYAVAATLVSHMMLAFT), 360–380 (LLGFSYSLLACALWPMVAFIV), 391–411 (FMQSIQNLGLAVIAILAGMIL), and 417–437 (LLLEVFFIACVSLSLLAVVCL).

It belongs to the major facilitator superfamily. As to quaternary structure, homodimer. Interacts with lysosomal protein GLMP (via lumenal domain); the interaction starts while both proteins are still in the endoplasmic reticulum and is required for stabilization of MFSD1 in lysosomes but has no direct effect on its targeting to lysosomes or transporter activity. Post-translationally, not N-glycosylated. In terms of tissue distribution, in brain, expressed in the cortex, striatum hippocampus, hypothalamus, thalamus and brainstem (at protein level). Widely expressed with highest levels in kidney and spleen (at protein level).

The protein localises to the lysosome membrane. The enzyme catalyses L-alpha-aminoacyl-L-arginine(out) = L-alpha-aminoacyl-L-arginine(in). It catalyses the reaction L-arginyl-L-alpha-amino acid(out) = L-arginyl-L-alpha-amino acid(in). The catalysed reaction is L-arginyl-glycine(out) = L-arginyl-glycine(in). It carries out the reaction L-alpha-aminoacyl-L-lysine(out) = L-alpha-aminoacyl-L-lysine(in). The enzyme catalyses L-aspartyl-L-lysine(out) = L-aspartyl-L-lysine(in). It catalyses the reaction L-alanyl-L-lysine(out) = L-alanyl-L-lysine(in). The catalysed reaction is L-lysyl-L-alpha-amino acid(out) = L-lysyl-L-alpha-amino acid(in). It carries out the reaction L-lysyl-L-alanine(out) = L-lysyl-L-alanine(in). The enzyme catalyses L-lysyl-L-lysine(out) = L-lysyl-L-lysine(in). It catalyses the reaction L-lysyl-glycine(out) = L-lysyl-glycine(in). The catalysed reaction is L-alpha-aminoacyl-L-histidine(out) = L-alpha-aminoacyl-L-histidine(in). It carries out the reaction L-histidyl-L-alpha-amino acid(out) = L-histidyl-L-alpha-amino acid(in). The enzyme catalyses L-histidyl-glycine(out) = L-histidyl-glycine(in). Its function is as follows. Lysosomal dipeptide uniporter that selectively exports lysine, arginine or histidine-containing dipeptides with a net positive charge from the lysosome lumen into the cytosol. Could play a role in a specific type of protein O-glycosylation indirectly regulating macrophages migration and tissue invasion. Also essential for liver homeostasis. The chain is Lysosomal dipeptide transporter MFSD1 from Mus musculus (Mouse).